Here is an 896-residue protein sequence, read N- to C-terminus: Translation initiation factor IF-2 (896 aa).

2 stretches are compositionally biased toward basic and acidic residues: residues K94 to V159 and D166 to W219. A disordered region spans residues K94–K307. Over residues G256 to N271 the composition is skewed to basic residues. Residues K272–A285 show a composition bias toward basic and acidic residues. The 170-residue stretch at P395–K564 folds into the tr-type G domain. The tract at residues G404–T411 is G1. G404–T411 lines the GTP pocket. Residues G429–H433 form a G2 region. The G3 stretch occupies residues D450–G453. GTP is bound by residues D450–H454 and N504–D507. A G4 region spans residues N504–D507. A G5 region spans residues S540–K542.

Belongs to the TRAFAC class translation factor GTPase superfamily. Classic translation factor GTPase family. IF-2 subfamily.

The protein localises to the cytoplasm. One of the essential components for the initiation of protein synthesis. Protects formylmethionyl-tRNA from spontaneous hydrolysis and promotes its binding to the 30S ribosomal subunits. Also involved in the hydrolysis of GTP during the formation of the 70S ribosomal complex. The chain is Translation initiation factor IF-2 (infB) from Klebsiella oxytoca.